Consider the following 293-residue polypeptide: MVVSVPATSANLGPGFDCLGLSLNLRNRFFIEPSSFHAVKLVGEGEGIPKFLTNNIFTKVFYEILKKHGNDGSFKFLLHNKVPITRGMGSSSAMIVGAVASAFAFLGFDFDRENIVNTALIYENHPDNITPAVFGGYNAAFVEKKKVISLKTKIPSFLKAVMVIPNRAISTKQSRHLLPKRYSVQESVFNLSHASLMTMAIVQGKWDLLRCCSKDRMHQYKRMQTYPVLFAIQKIALENNALMSTLSGSGSSFFNMCYEEDAPKLKQVLSKKFPKFRVAVLDFDNDGVLIEKD.

83 to 93 (PITRGMGSSSA) is a binding site for ATP.

Belongs to the GHMP kinase family. Homoserine kinase subfamily.

The protein resides in the cytoplasm. It carries out the reaction L-homoserine + ATP = O-phospho-L-homoserine + ADP + H(+). It functions in the pathway amino-acid biosynthesis; L-threonine biosynthesis; L-threonine from L-aspartate: step 4/5. Functionally, catalyzes the ATP-dependent phosphorylation of L-homoserine to L-homoserine phosphate. In Helicobacter pylori (strain ATCC 700392 / 26695) (Campylobacter pylori), this protein is Homoserine kinase.